The following is a 106-amino-acid chain: Small ribosomal subunit protein uS10 (106 aa).

This sequence belongs to the universal ribosomal protein uS10 family. In terms of assembly, part of the 30S ribosomal subunit.

Its function is as follows. Involved in the binding of tRNA to the ribosomes. The protein is Small ribosomal subunit protein uS10 of Caldicellulosiruptor saccharolyticus (strain ATCC 43494 / DSM 8903 / Tp8T 6331).